The sequence spans 299 residues: Deoxyhypusine hydroxylase (299 aa).

HEAT-like PBS-type repeat units lie at residues 54-80, 87-113, 174-200, 205-231, and 238-264; these read LKHE…VLQD, VRHE…YSED, DRYR…GLRA, FRHE…ALRS, and VRHE…FAQD. The Fe cation site is built by His56, His89, and Glu90. His207, His240, and Glu241 together coordinate Fe cation.

The protein belongs to the deoxyhypusine hydroxylase family. It depends on Fe(2+) as a cofactor.

The catalysed reaction is [eIF5A protein]-deoxyhypusine + AH2 + O2 = [eIF5A protein]-hypusine + A + H2O. The protein operates within protein modification; eIF5A hypusination. Catalyzes the hydroxylation of the N(6)-(4-aminobutyl)-L-lysine intermediate produced by deoxyhypusine synthase/DHPS on a critical lysine of the eukaryotic translation initiation factor 5A/eIF-5A. This is the second step of the post-translational modification of that lysine into an unusual amino acid residue named hypusine. Hypusination is unique to mature eIF-5A factor and is essential for its function. The protein is Deoxyhypusine hydroxylase of Gallus gallus (Chicken).